Reading from the N-terminus, the 240-residue chain is Tetrahydromethanopterin S-methyltransferase subunit A (240 aa).

Residues 1 to 218 lie on the Cytoplasmic side of the membrane; it reads MVDKKEPASG…KFHSGVHAGK (218 aa). Position 85 (His85) interacts with 5-hydroxybenzimidazolylcob(I)amide. Residues 219 to 239 form a helical membrane-spanning segment; it reads IEGAMIGLTVTISLLGLLLLG. A topological domain (extracellular) is located at residue Arg240.

This sequence belongs to the MtrA family. The complex is composed of 8 subunits; MtrA, MtrB, MtrC, MtrD, MtrE, MtrF, MtrG and MtrH. The cofactor is 5-hydroxybenzimidazolylcob(I)amide.

It is found in the cell membrane. The catalysed reaction is 5-methyl-5,6,7,8-tetrahydromethanopterin + coenzyme M + 2 Na(+)(in) = 5,6,7,8-tetrahydromethanopterin + methyl-coenzyme M + 2 Na(+)(out). It functions in the pathway one-carbon metabolism; methanogenesis from CO(2); methyl-coenzyme M from 5,10-methylene-5,6,7,8-tetrahydromethanopterin: step 2/2. In terms of biological role, part of a complex that catalyzes the formation of methyl-coenzyme M and tetrahydromethanopterin from coenzyme M and methyl-tetrahydromethanopterin. This is an energy-conserving, sodium-ion translocating step. This chain is Tetrahydromethanopterin S-methyltransferase subunit A, found in Methanosarcina acetivorans (strain ATCC 35395 / DSM 2834 / JCM 12185 / C2A).